A 454-amino-acid chain; its full sequence is Phosphoglucosamine mutase (454 aa).

The Phosphoserine intermediate role is filled by serine 101. Mg(2+)-binding residues include serine 101, aspartate 243, aspartate 245, and aspartate 247. Residue serine 101 is modified to Phosphoserine.

Belongs to the phosphohexose mutase family. Mg(2+) is required as a cofactor. Post-translationally, activated by phosphorylation.

It carries out the reaction alpha-D-glucosamine 1-phosphate = D-glucosamine 6-phosphate. Its function is as follows. Catalyzes the conversion of glucosamine-6-phosphate to glucosamine-1-phosphate. The protein is Phosphoglucosamine mutase of Geotalea uraniireducens (strain Rf4) (Geobacter uraniireducens).